A 453-amino-acid chain; its full sequence is Plasticin (453 aa).

The interval 1 to 51 (MSHSTFSHLFSPHFGAPVYSPVSSRIGGRYVSSSVPTRSVDFRSRSSAPAP) is head. The interval 71–112 (FATRSNEKRELQELNDRFASFIEKVRHLEQQNSKLILELGQY) is coil 1A. Positions 77–390 (EKRELQELND…KLLEGEENRI (314 aa)) constitute an IF rod domain. Residues 113 to 126 (KDQHQGSTGRINEL) form a linker 1 region. The interval 127–222 (CQQEMRELRR…KMHDEEIQDV (96 aa)) is coil 1B. The linker 12 stretch occupies residues 223–245 (QVSVQSQQMKMEVMETSSRPDLT). Residues 246-391 (GALRDIRAQY…LLEGEENRIV (146 aa)) form a coil 2 region. The interval 392–453 (VPIMKMPSMS…KKDSHGQGKD (62 aa)) is tail. The disordered stretch occupies residues 421–453 (IKTVETRDGEVVKESTKEKGRDEKKDSHGQGKD). Over residues 424-453 (VETRDGEVVKESTKEKGRDEKKDSHGQGKD) the composition is skewed to basic and acidic residues.

The protein belongs to the intermediate filament family. Optic nerve.

Its function is as follows. Type III neurofilament. This chain is Plasticin, found in Carassius auratus (Goldfish).